The sequence spans 680 residues: Fermitin family homolog 2 (680 aa).

The segment at 40–81 (HIGGVMLKLVEKLDVKKDWSDHALWWEKKRTWLLKTHWTLDK) is interaction with membranes containing phosphatidylinositol phosphate. A disordered region spans residues 141 to 162 (LKKPRDPTKKKKKKLDDQSEDE). Phosphoserine occurs at positions 159, 181, 339, and 351. The FERM domain occupies 189 to 661 (MTPTYDAHDG…GYIFLSTRAK (473 aa)). Residues 380–476 (KVFKPKKLTL…WMAACRLASK (97 aa)) form the PH domain. Residue Lys383 coordinates a 1,2-diacyl-sn-glycero-3-phospho-(1D-myo-inositol-3,4,5-trisphosphate). Residue Ser666 is modified to Phosphoserine.

This sequence belongs to the kindlin family. As to quaternary structure, interacts with ITGB1; the interaction is inhibited in presence of ITGB1BP1. Interacts with FBLIM1. Interacts with active, unphosphorylated CTNNB1. Identified in a complex with CTNNB1 and TCF7L2/TCF4. Interacts with ILK, ITGB1 and ITGB3. Detected in adult heart muscle (at protein level). Detected in heart, skeletal muscle and testis.

Its subcellular location is the cytoplasm. The protein resides in the cell cortex. The protein localises to the cytoskeleton. It is found in the stress fiber. It localises to the cell junction. Its subcellular location is the focal adhesion. The protein resides in the membrane. The protein localises to the cell projection. It is found in the lamellipodium membrane. It localises to the nucleus. Its subcellular location is the myofibril. The protein resides in the sarcomere. The protein localises to the i band. It is found in the cell surface. In terms of biological role, scaffolding protein that enhances integrin activation mediated by TLN1 and/or TLN2, but activates integrins only weakly by itself. Binds to membranes enriched in phosphoinositides. Enhances integrin-mediated cell adhesion onto the extracellular matrix and cell spreading; this requires both its ability to interact with integrins and with phospholipid membranes. Required for the assembly of focal adhesions. Participates in the connection between extracellular matrix adhesion sites and the actin cytoskeleton and also in the orchestration of actin assembly and cell shape modulation. Recruits FBLIM1 to focal adhesions. Plays a role in the TGFB1 and integrin signaling pathways. Stabilizes active CTNNB1 and plays a role in the regulation of transcription mediated by CTNNB1 and TCF7L2/TCF4 and in Wnt signaling. This Mus musculus (Mouse) protein is Fermitin family homolog 2 (Fermt2).